Reading from the N-terminus, the 46-residue chain is Peroxidase 1 (46 aa).

It belongs to the peroxidase family. Classical plant (class III) peroxidase subfamily. The cofactor is heme b. It depends on Ca(2+) as a cofactor.

It localises to the secreted. It carries out the reaction 2 a phenolic donor + H2O2 = 2 a phenolic radical donor + 2 H2O. Functionally, removal of H(2)O(2), oxidation of toxic reductants, biosynthesis and degradation of lignin, suberization, auxin catabolism, response to environmental stresses such as wounding, pathogen attack and oxidative stress. These functions might be dependent on each isozyme/isoform in each plant tissue. This Catharanthus roseus (Madagascar periwinkle) protein is Peroxidase 1.